We begin with the raw amino-acid sequence, 867 residues long: Leucine--tRNA ligase (867 aa).

The 'HIGH' region signature appears at 40–51 (PYPSGAGLHVGH). The 'KMSKS' region motif lies at 638–642 (KMSKS). Residue Lys641 coordinates ATP.

This sequence belongs to the class-I aminoacyl-tRNA synthetase family.

The protein resides in the cytoplasm. It catalyses the reaction tRNA(Leu) + L-leucine + ATP = L-leucyl-tRNA(Leu) + AMP + diphosphate. The protein is Leucine--tRNA ligase of Leptospira biflexa serovar Patoc (strain Patoc 1 / Ames).